The following is a 321-amino-acid chain: 5,10-methylenetetrahydromethanopterin reductase (321 aa).

It belongs to the mer family.

Its subcellular location is the cytoplasm. The enzyme catalyses 5-methyl-5,6,7,8-tetrahydromethanopterin + oxidized coenzyme F420-(gamma-L-Glu)(n) + H(+) = 5,10-methylenetetrahydromethanopterin + reduced coenzyme F420-(gamma-L-Glu)(n). Its pathway is one-carbon metabolism; methanogenesis from CO(2); methyl-coenzyme M from 5,10-methylene-5,6,7,8-tetrahydromethanopterin: step 1/2. In terms of biological role, catalyzes the reversible reduction of methylene-H(4)MPT to methyl-H(4)MPT. In Methanothermobacter thermautotrophicus (strain ATCC 29096 / DSM 1053 / JCM 10044 / NBRC 100330 / Delta H) (Methanobacterium thermoautotrophicum), this protein is 5,10-methylenetetrahydromethanopterin reductase.